Consider the following 120-residue polypeptide: MAGVKAYELRTKSKEQLASQLVDLKKELAELKVQKLSRPSLPKIKTVRKSIACVLTVINEQQREAVRQLYKGKKYQPKDLRAKKTRALRRALTKFEASQVTEKQRKKQIAFPQRKYAIKA.

S13 and S50 each carry phosphoserine.

It belongs to the universal ribosomal protein uL29 family. As to quaternary structure, component of the large ribosomal subunit (LSU). Mature yeast ribosomes consist of a small (40S) and a large (60S) subunit. The 40S small subunit contains 1 molecule of ribosomal RNA (18S rRNA) and 33 different proteins (encoded by 57 genes). The large 60S subunit contains 3 rRNA molecules (25S, 5.8S and 5S rRNA) and 46 different proteins (encoded by 81 genes). uL29 is associated with the polypeptide exit tunnel.

The protein resides in the cytoplasm. Its function is as follows. Component of the ribosome, a large ribonucleoprotein complex responsible for the synthesis of proteins in the cell. The small ribosomal subunit (SSU) binds messenger RNAs (mRNAs) and translates the encoded message by selecting cognate aminoacyl-transfer RNA (tRNA) molecules. The large subunit (LSU) contains the ribosomal catalytic site termed the peptidyl transferase center (PTC), which catalyzes the formation of peptide bonds, thereby polymerizing the amino acids delivered by tRNAs into a polypeptide chain. The nascent polypeptides leave the ribosome through a tunnel in the LSU and interact with protein factors that function in enzymatic processing, targeting, and the membrane insertion of nascent chains at the exit of the ribosomal tunnel. The sequence is that of Large ribosomal subunit protein uL29A from Saccharomyces cerevisiae (strain ATCC 204508 / S288c) (Baker's yeast).